The chain runs to 349 residues: KH domain-containing, RNA-binding, signal transduction-associated protein 2 (349 aa).

Positions 65–135 (LIPVKQYPKF…HLSDELHVLI (71 aa)) constitute a KH domain. Disordered stretches follow at residues 181–263 (SEES…PPPA) and 321–349 (EWAT…YGRY). A compositionally biased stretch (low complexity) spans 218 to 231 (RGVLTPRGTTVTRG). Omega-N-methylarginine is present on residues arginine 230 and arginine 240. Basic and acidic residues predominate over residues 340 to 349 (GYREHPYGRY).

It belongs to the KHDRBS family. As to quaternary structure, self-associates to form homooligomers. Interacts with KHDRBS1/SAM68; heterooligomer formation of KHDRBS family proteins may modulate RNA substrate specificity. Interacts with RBMX, SAFB, SFRS9 and YTHDC1. Interacts with FYN and PLCG1 (via SH3 domain). Interacts (phosphorylated) with FYN, GRB2, PLCG1 and RASA1 (via SH2 domain). Methylated. Post-translationally, tyrosine phosphorylated by FYN, PTK6 and SRC. Tyrosine phosphorylated by SRC during mitosis. Expressed in heart, skin, brain, colon, spleen, kidney, cervix and testis. In adult cerebellum expressed predominantly in Purkinje cells and in the hippocampus is abundantly expressed in glutamatergic dentate granule cells and in specific inhibitory Schaffer collateral-associated and path-associated interneurons; expression is restricted to neuronal subpopulations largely non-overlapping with expression of KHDRBS3/SLM-2 (at protein level).

The protein localises to the nucleus. Functionally, RNA-binding protein that plays a role in the regulation of alternative splicing and influences mRNA splice site selection and exon inclusion. Binds both poly(A) and poly(U) homopolymers. Phosphorylation by PTK6 inhibits its RNA-binding ability. Induces an increased concentration-dependent incorporation of exon in CD44 pre-mRNA by direct binding to purine-rich exonic enhancer. Can regulate alternative splicing of neurexins NRXN1-3 in the laminin G-like domain 6 containing the evolutionary conserved neurexin alternative spliced segment 4 (AS4) involved in neurexin selective targeting to postsynaptic partners. Regulates cell-type specific alternative splicing of NRXN1 at AS4 and acts synergystically with SAM68 in exon skipping. In contrast acts antagonistically with SAM68 in NRXN3 exon skipping at AS4. Its phosphorylation by FYN inhibits its ability to regulate splice site selection. May function as an adapter protein for Src kinases during mitosis. This is KH domain-containing, RNA-binding, signal transduction-associated protein 2 (Khdrbs2) from Mus musculus (Mouse).